The sequence spans 588 residues: Adenine deaminase (588 aa).

Belongs to the metallo-dependent hydrolases superfamily. Adenine deaminase family. As to quaternary structure, homodimer. It depends on Mn(2+) as a cofactor.

The enzyme catalyses adenine + H2O + H(+) = hypoxanthine + NH4(+). The sequence is that of Adenine deaminase from Escherichia coli O9:H4 (strain HS).